A 367-amino-acid polypeptide reads, in one-letter code: Choline-phosphate cytidylyltransferase A (367 aa).

N-acetylmethionine is present on M1. The interval 1–32 (MDAQSSAKVNSRKRRKEAPGPNGATEEDGIPS) is disordered. Position 8 is an N6-acetyllysine (K8). Residues I84, F85, H92, and K122 each coordinate CTP. 2 residues coordinate phosphocholine: K122 and W151. The CTP site is built by H168, D169, Y173, Q195, R196, T197, and I200. Amphipathic stretches follow at residues 228–287 (KELN…EFIG) and 298–315 (ALKH…QAIS). At S233 the chain carries Phosphoserine. Positions 272–293 (IDLIQKWEEKSREFIGSFLEMF) are autoinhibitory (AI). The segment at 313-367 (AISPKQSPSSSPTHERSPSPSFRWPFSGKTSPSSSPASLSRCRAVTCDISEDEED) is disordered. S315, S319, S321, S322, and S323 each carry phosphoserine. The segment covering 315-324 (SPKQSPSSSP) has biased composition (polar residues). Copy 1 of the repeat occupies 319–324 (SPSSSP). The 3 X repeats stretch occupies residues 319–348 (SPSSSPTHERSPSPSFRWPFSGKTSPSSSP). Residue T325 is modified to Phosphothreonine. 3 positions are modified to phosphoserine: S329, S331, and S333. A 2; approximate repeat occupies 329–333 (SPSPS). A compositionally biased stretch (low complexity) spans 330 to 352 (PSPSFRWPFSGKTSPSSSPASLS). T342 is modified (phosphothreonine). 6 positions are modified to phosphoserine: S343, S345, S346, S347, S350, and S352. Repeat unit 3 spans residues 343 to 348 (SPSSSP). Phosphothreonine is present on T358. S362 carries the phosphoserine modification.

The protein belongs to the cytidylyltransferase family. As to quaternary structure, homodimer. In terms of processing, the serine residues of the C-terminus are phosphorylated. The inactive soluble form is stabilized by phosphorylation, the active membrane bound form is promoted by anionic lipids or diacylglycerol, and is stabilized by dephosphorylation. Post-translationally, monoubiquitinated by the SCF(FBXL2) complex, leading to proteasomal degradation. Brain and liver (at protein level). Also found in heart, kidney, spleen, lung, skeletal muscle, ovary and testis.

Its subcellular location is the cytoplasm. The protein localises to the cytosol. The protein resides in the membrane. It is found in the endoplasmic reticulum membrane. It localises to the nucleus. It catalyses the reaction phosphocholine + CTP + H(+) = CDP-choline + diphosphate. It participates in phospholipid metabolism; phosphatidylcholine biosynthesis; phosphatidylcholine from phosphocholine: step 1/2. Interconverts between an inactive cytosolic form and an active membrane-bound form. Activation involves disruption of an inhibitory interaction between helices at the base of the active site and the autoinhibitory (AI) region. In terms of biological role, catalyzes the key rate-limiting step in the CDP-choline pathway for phosphatidylcholine biosynthesis. The polypeptide is Choline-phosphate cytidylyltransferase A (Pcyt1a) (Mus musculus (Mouse)).